Consider the following 155-residue polypeptide: RxLR effector protein 24 (155 aa).

A signal peptide spans 1-21 (MRLLIWVLFVTLVTFVSNTTA). The RxLR-dEER motif lies at 52–78 (RFLRTESKNDLKSDADTNGIDIEDEER). Residues 105 to 155 (EKAFQRMNQKGETPTTLAKRLDIGKTAEKRFEKTYEKYTAWWINHHTNAGT) are RABA-binding domain.

The protein belongs to the RxLR effector family. In terms of assembly, interacts with Arabidopsis thaliana RABA GTPases including RABA1a, RABA1b, RABA1c, RABA1d, RABA1f, RABA2a, RABA2c, RABA2d, RABA4a, RABA4b and RABA4c.

The protein localises to the secreted. Its subcellular location is the host cell membrane. It localises to the host endomembrane system. Functionally, effector protein that contributes to pathogen virulence. Targets members of the RABA GTPases subfamily to inhibit vesicular secretion, leading to an accumulation of secretory proteins in the endoplasmic reticulum. The polypeptide is RxLR effector protein 24 (Phytophthora brassicae).